The chain runs to 636 residues: Methionine--tRNA ligase (636 aa).

Residues Tyr-12–Ser-22 carry the 'HIGH' region motif. 4 residues coordinate Zn(2+): Cys-127, Cys-130, Cys-145, and Cys-148. The 'KMSKS' region motif lies at Lys-298–Ser-302. Position 301 (Lys-301) interacts with ATP. A tRNA-binding domain is found at Glu-535–Ser-636.

Belongs to the class-I aminoacyl-tRNA synthetase family. MetG type 2A subfamily. In terms of assembly, homodimer. The cofactor is Zn(2+).

Its subcellular location is the cytoplasm. It carries out the reaction tRNA(Met) + L-methionine + ATP = L-methionyl-tRNA(Met) + AMP + diphosphate. In terms of biological role, is required not only for elongation of protein synthesis but also for the initiation of all mRNA translation through initiator tRNA(fMet) aminoacylation. In Fusobacterium nucleatum subsp. nucleatum (strain ATCC 25586 / DSM 15643 / BCRC 10681 / CIP 101130 / JCM 8532 / KCTC 2640 / LMG 13131 / VPI 4355), this protein is Methionine--tRNA ligase (metG).